The chain runs to 249 residues: Diaminopimelate epimerase (249 aa).

Substrate-binding residues include N11 and N60. C69 functions as the Proton donor in the catalytic mechanism. Substrate contacts are provided by residues 70-71 (GN), N164, and 182-183 (ER). The active-site Proton acceptor is C192. Position 193–194 (193–194 (GT)) interacts with substrate.

It belongs to the diaminopimelate epimerase family. As to quaternary structure, homodimer.

Its subcellular location is the cytoplasm. The enzyme catalyses (2S,6S)-2,6-diaminopimelate = meso-2,6-diaminopimelate. It participates in amino-acid biosynthesis; L-lysine biosynthesis via DAP pathway; DL-2,6-diaminopimelate from LL-2,6-diaminopimelate: step 1/1. In terms of biological role, catalyzes the stereoinversion of LL-2,6-diaminopimelate (L,L-DAP) to meso-diaminopimelate (meso-DAP), a precursor of L-lysine and an essential component of the bacterial peptidoglycan. In Campylobacter jejuni subsp. jejuni serotype O:6 (strain 81116 / NCTC 11828), this protein is Diaminopimelate epimerase.